Reading from the N-terminus, the 547-residue chain is MFS-type transporter ltbE (547 aa).

A disordered region spans residues 1-23; that stretch reads MEIAAETTGPAGVTTDVTNAEES. 13 consecutive transmembrane segments (helical) span residues 33–53, 74–94, 104–124, 135–155, 165–185, 195–215, 240–260, 267–287, 310–330, 343–363, 370–390, 399–419, and 432–452; these read QGWA…VLAI, DIGW…PTCG, WVYC…AVAP, ISGL…SYCV, PIVL…GGSI, FIFW…WFTL, ATLL…GGIV, KVFG…CLQW, GFMM…PIYF, INLL…GSLA, VPFM…YQLV, WIGF…MPIL, and TGLV…PSVG. N-linked (GlcNAc...) asparagine glycosylation is present at N463. The helical transmembrane segment at 506-526 threads the bilayer; sequence VFWVGVATPALAWIASWAMEW.

This sequence belongs to the major facilitator superfamily. TCR/Tet family.

The protein localises to the cell membrane. MFS-type transporter; part of the gene cluster that mediates the biosynthesis of luteodienoside A, a glycosylated polyketide consisting of an unusual 1-O-beta-D-glucopyranosyl-myo-inositol (glucinol) ester of 3-hydroxy-2,2,4-trimethylocta-4,6-dienoic acid. LtbE is probably involved in the secretion of luteodienoside A. This chain is MFS-type transporter ltbE, found in Aspergillus luteorubrus.